Consider the following 402-residue polypeptide: Probable glutamate 5-kinase (402 aa).

Positions 58, 145, and 157 each coordinate substrate. ATP-binding positions include 177-178 and 218-224; these read TD and TGGMKTK. One can recognise a PUA domain in the interval 295–373; sequence HGSLEIDRGA…KEIASILGYN (79 aa).

This sequence belongs to the glutamate 5-kinase family.

It is found in the cytoplasm. The catalysed reaction is L-glutamate + ATP = L-glutamyl 5-phosphate + ADP. It participates in amino-acid biosynthesis; L-proline biosynthesis; L-glutamate 5-semialdehyde from L-glutamate: step 1/2. Its function is as follows. Catalyzes the transfer of a phosphate group to glutamate to form glutamate 5-phosphate which rapidly cyclizes to 5-oxoproline. The protein is Probable glutamate 5-kinase of Schizosaccharomyces pombe (strain 972 / ATCC 24843) (Fission yeast).